Reading from the N-terminus, the 1213-residue chain is tRNA wybutosine-synthesizing protein 4 (1213 aa).

Composition is skewed to low complexity over residues 1–13 and 39–52; these read METTEEVVAPATT and ATTTTTTTDGTTPT. Positions 1–76 are disordered; that stretch reads METTEEVVAP…DDQVMGTNNS (76 aa). Basic and acidic residues predominate over residues 53–67; it reads HNEHASAKDPRKAQD. S-adenosyl-L-methionine is bound by residues R117, G148, and D180. Residues 215–248 are compositionally biased toward low complexity; that stretch reads STPAATTTAAATTTTTTELKTTAATASSTSTEAP. Residues 215-272 form a disordered region; the sequence is STPAATTTAAATTTTTTELKTTAATASSTSTEAPQKPKKSPKPKDKSKAARAPAPTTA. Residues 289 to 290 and E318 each bind S-adenosyl-L-methionine; that span reads DL. The tract at residues 879 to 900 is disordered; that stretch reads EPRSLPLRNQAPNGAEGNANGS. One can recognise a JmjC domain in the interval 1006 to 1166; it reads PTEKPAVLSD…YAAGKDVYGN (161 aa).

It belongs to the methyltransferase superfamily. LCMT family.

It catalyses the reaction 7-[(3S)-3-amino-3-carboxypropyl]wyosine(37) in tRNA(Phe) + S-adenosyl-L-methionine = 7-[(3S)-(3-amino-3-methoxycarbonyl)propyl]wyosine(37) in tRNA(Phe) + S-adenosyl-L-homocysteine. The enzyme catalyses 7-[(3S)-(3-amino-3-methoxycarbonyl)propyl]wyosine(37) in tRNA(Phe) + S-adenosyl-L-methionine + CO2 = wybutosine(37) in tRNA(Phe) + S-adenosyl-L-homocysteine + 2 H(+). Its pathway is tRNA modification; wybutosine-tRNA(Phe) biosynthesis. In terms of biological role, probable S-adenosyl-L-methionine-dependent methyltransferase that acts as a component of the wybutosine biosynthesis pathway. Wybutosine is a hyper modified guanosine with a tricyclic base found at the 3'-position adjacent to the anticodon of eukaryotic phenylalanine tRNA. May methylate the carboxyl group of leucine residues to form alpha-leucine ester residues. This Neurospora crassa (strain ATCC 24698 / 74-OR23-1A / CBS 708.71 / DSM 1257 / FGSC 987) protein is tRNA wybutosine-synthesizing protein 4 (lcm-2).